The chain runs to 545 residues: CTP synthase (545 aa).

The tract at residues 1–266 (MTTRYIFVTG…DDLVIKRFNL (266 aa)) is amidoligase domain. Position 14 (serine 14) interacts with CTP. Serine 14 provides a ligand contact to UTP. ATP is bound by residues 15 to 20 (SLGKGI) and aspartate 72. Aspartate 72 and glutamate 140 together coordinate Mg(2+). CTP-binding positions include 147 to 149 (DIE), 187 to 192 (KTKPTQ), and lysine 223. UTP-binding positions include 187 to 192 (KTKPTQ) and lysine 223. Position 239 to 241 (239 to 241 (KDV)) interacts with ATP. Residues 291-542 (TIGMVGKYIE…IAASYAYQKR (252 aa)) enclose the Glutamine amidotransferase type-1 domain. Residue glycine 352 coordinates L-glutamine. Cysteine 379 acts as the Nucleophile; for glutamine hydrolysis in catalysis. Residues 380-383 (LGMQ), glutamate 403, and arginine 470 contribute to the L-glutamine site. Residues histidine 515 and glutamate 517 contribute to the active site.

Belongs to the CTP synthase family. As to quaternary structure, homotetramer.

It carries out the reaction UTP + L-glutamine + ATP + H2O = CTP + L-glutamate + ADP + phosphate + 2 H(+). The catalysed reaction is L-glutamine + H2O = L-glutamate + NH4(+). The enzyme catalyses UTP + NH4(+) + ATP = CTP + ADP + phosphate + 2 H(+). It functions in the pathway pyrimidine metabolism; CTP biosynthesis via de novo pathway; CTP from UDP: step 2/2. Its activity is regulated as follows. Allosterically activated by GTP, when glutamine is the substrate; GTP has no effect on the reaction when ammonia is the substrate. The allosteric effector GTP functions by stabilizing the protein conformation that binds the tetrahedral intermediate(s) formed during glutamine hydrolysis. Inhibited by the product CTP, via allosteric rather than competitive inhibition. Catalyzes the ATP-dependent amination of UTP to CTP with either L-glutamine or ammonia as the source of nitrogen. Regulates intracellular CTP levels through interactions with the four ribonucleotide triphosphates. In Shewanella frigidimarina (strain NCIMB 400), this protein is CTP synthase.